Consider the following 8545-residue polypeptide: Nuclear anchorage protein 1 (8545 aa).

The actin-binding stretch occupies residues 1–325; that stretch reads MSSSPPARPC…VITYVSQFVR (325 aa). Residues 1–8494 lie on the Cytoplasmic side of the membrane; that stretch reads MSSSPPARPC…QRSRWRRVLR (8494 aa). The region spanning 23–130 is the Calponin-homology (CH) 1 domain; it reads KAQKNTFTRW…LIWQIILHFQ (108 aa). The interval 148-197 is disordered; the sequence is TEEPTSSAQPEVVVTAPSPTPSSKKSHSKVSSLSGSKTSLASGEKAPSSP. The span at 159 to 190 shows a compositional bias: low complexity; it reads VVVTAPSPTPSSKKSHSKVSSLSGSKTSLASG. Positions 222–328 constitute a Calponin-homology (CH) 2 domain; that stretch reads QSVEQVFLRW…YVSQFVRMFG (107 aa). Coiled-coil stretches lie at residues 754-774, 1072-1101, 1215-1236, 1324-1384, 1574-1629, 1725-1754, 1950-1981, 2103-2580, 2682-2712, 2852-2949, 3002-3119, 3178-3295, 3346-3417, 3482-3552, 3587-3703, 3781-3839, 3902-4022, 4114-4198, and 4249-4320; these read NIRD…NHSR, SFFQ…LMVH, ADIL…EIQA, DTKK…QFED, RSIE…DLVK, ENRN…YEDA, PAII…NYNQ, DNIE…KKSD, SVKE…KIAK, IMQE…NIGK, DQIV…KTVV, DDEK…DEFK, QLQH…PEND, DELI…EKSL, KAEE…ELLD, ALKA…KEQL, AAHD…KTVV, and LDVA…DEFK. The span at 3010-3019 shows a compositional bias: basic and acidic residues; that stretch reads EAEDVTAKES. A disordered region spans residues 3010 to 3033; the sequence is EAEDVTAKESAKKKKKDKKKSPQE. Tandem repeats lie at residues 3241-4143, 4144-5097, 5098-6000, 6001-6903, 6904-7806, and 7807-8199. A 6 X tandem repeat region spans residues 3241-8199; that stretch reads QVAKDIKDSK…TLIPDLEERA (4959 aa). Over residues 3913–3922 the composition is skewed to basic and acidic residues; the sequence is EAEDVTAKES. Positions 3913-3936 are disordered; the sequence is EAEDVTAKESAKKKKKDKKKSPQE. The span at 4372-4393 shows a compositional bias: basic and acidic residues; it reads ITREDGGDDNKSPDELIDDRGR. Residues 4372–4395 form a disordered region; that stretch reads ITREDGGDDNKSPDELIDDRGRST. Coiled-coil stretches lie at residues 4436–4506, 4541–4657, 4735–4793, 4856–4976, 5035–5152, 5203–5274, 5339–5409, 5444–5560, 5638–5696, 5759–5879, 5938–6055, 6106–6177, 6242–6312, 6347–6463, 6541–6599, 6662–6782, 6841–6958, 7009–7080, 7145–7215, 7250–7366, 7444–7502, 7565–7685, 7744–7861, 7912–7983, 8048–8118, 8153–8204, 8273–8329, and 8370–8390; these read DELI…EKSL, KAEE…ELLD, ALKA…KEQL, AAHD…KTVV, DDEK…DEFK, QLQH…PEND, KAEE…IWER, VAED…DINN, and STSI…KEIE. Positions 4867–4876 are enriched in basic and acidic residues; that stretch reads EAEDVTAKES. Residues 4867-4890 are disordered; the sequence is EAEDVTAKESAKKKKKDKKKSPQE. Residues 5770–5779 show a composition bias toward basic and acidic residues; the sequence is EAEDVTAKES. Residues 5770–5793 are disordered; that stretch reads EAEDVTAKESAKKKKKDKKKSPQE. Positions 6673–6682 are enriched in basic and acidic residues; it reads EAEDVTAKES. The disordered stretch occupies residues 6673-6696; it reads EAEDVTAKESAKKKKKDKKKSPQE. The span at 7576 to 7585 shows a compositional bias: basic and acidic residues; the sequence is EAEDVTAKES. Residues 7576–7599 form a disordered region; that stretch reads EAEDVTAKESAKKKKKDKKKSPQE. Disordered regions lie at residues 8391–8418 and 8449–8480; these read PRLQ…KPYD and SDSE…LSEE. Residues 8401-8411 are compositionally biased toward acidic residues; that stretch reads DNEDDEDEEKG. Positions 8451–8464 are enriched in basic and acidic residues; that stretch reads SESRSEFDSLDSRS. The region spanning 8486–8545 is the KASH domain; the sequence is RSRWRRVLRTALPLQALLVLLMGAACLVPHCDDEYCCQLLNNFAKSFDPSLEFVNGPPPF. The helical; Anchor for type IV membrane protein transmembrane segment at 8495 to 8513 threads the bilayer; the sequence is TALPLQALLVLLMGAACLV. Over 8514 to 8545 the chain is Perinuclear space; that stretch reads PHCDDEYCCQLLNNFAKSFDPSLEFVNGPPPF.

The protein belongs to the nesprin family. Interacts with F-actin via its N-terminal domain. Most likely interacts with unc-84; the interaction is probably required to recruit anc-1 to the nuclear envelope. In terms of tissue distribution, ubiquitously expressed in all postembryonic cells.

The protein localises to the nucleus outer membrane. It is found in the cytoplasm. Its subcellular location is the cytoskeleton. Functionally, plays a central role in nuclear and mitochondrial anchoring. Probably connects nuclei to the cytoskeleton by interacting with unc-84 at the nuclear envelope and with F-actin in the cytoplasm, creating a bridge across the nuclear envelope between the cytoskeleton and the nucleus. Has a role in positioning of the cell body of the PVQ lumbar interneuron. The chain is Nuclear anchorage protein 1 from Caenorhabditis elegans.